The following is a 102-amino-acid chain: Urease subunit beta (102 aa).

Belongs to the urease beta subunit family. In terms of assembly, heterotrimer of UreA (gamma), UreB (beta) and UreC (alpha) subunits. Three heterotrimers associate to form the active enzyme.

It localises to the cytoplasm. The catalysed reaction is urea + 2 H2O + H(+) = hydrogencarbonate + 2 NH4(+). It participates in nitrogen metabolism; urea degradation; CO(2) and NH(3) from urea (urease route): step 1/1. This is Urease subunit beta from Clostridium perfringens.